Reading from the N-terminus, the 254-residue chain is Short-chain dehydrogenase srdF (254 aa).

The NADP(+) site is built by Ile18, Ser37, Glu67, Asn95, Tyr167, Lys171, Val199, and Thr201. Tyr167 serves as the catalytic Proton donor. Residue Lys171 is the Lowers pKa of active site Tyr of the active site.

The protein belongs to the short-chain dehydrogenases/reductases (SDR) family.

Its function is as follows. Short-chain dehydrogenase; part of the gene cluster that mediates the biosynthesis of sordarial, a salicylic aldehyde structurally related to the phytotoxin pyriculol. The most interesting aspect of this pathway is formation of an aromatic product from the highly reducing polyketide synthase srdA. SrdA synthesizes a reduced polyketide chain from one molecule of acetyl-CoA and five molecules of malonyl-CoA. The polyketide chain is then reductively released as an aldehyde. The oxidoreductases srdC, srdD and srdE then oxidize one of the hydroxy groups to facilitate the intramolecular aldol condensation, followed by dehydration to yield a salicylic aldehyde. This aldehyde can undergo facile reduction by endogenous reductases to yield the alcohol 1-hydroxy-2-hydroxymethyl-3-pent-1,3-dienylbenzene. The flavin-dependent srdI counteract against the propensity of the aldehydes to be reduced under physiological conditions and is responsible for reoxidizing 1-hydroxy-2-hydroxymethyl-3-pent-1,3-dienylbenzene back to the salicylic aldehyde. This salicylic aldehyde is then selectively epoxidized by the cupin-domain-containing oxidoreductase srdB to yield the epoxide, which can be hydrolyzed stereoselectively by the hydrolase srdG to give the final product sordarial. The chain is Short-chain dehydrogenase srdF from Neurospora crassa (strain ATCC 24698 / 74-OR23-1A / CBS 708.71 / DSM 1257 / FGSC 987).